A 213-amino-acid chain; its full sequence is MLLRKELEPTGYVTWEVPNNEKIIAITFDDGPDPTYTPQVLDLLRQYKAEATFFMIGFRVQRNPYLVKQVLKEGHEIGNHTMNHLYASNSSDEKLENDILDGKKFFEKWVKEPLLFRPPGGYINDAVFKTAKEAGYQTVLWSWHQDPRDWANPGVESIVNHVVKNAKSGDIVLLHDGGNDRSQTVAALAKILPELKKQGYRFVTVSELLRYKH.

Positions 22 to 203 constitute a NodB homology domain; that stretch reads KIIAITFDDG…ELKKQGYRFV (182 aa). D29 functions as the Proton acceptor in the catalytic mechanism. The Zn(2+) site is built by D30, H80, and H84. The active-site Proton donor is the H175.

It belongs to the polysaccharide deacetylase family. Requires Zn(2+) as cofactor.

The enzyme catalyses peptidoglycan-N-acetyl-D-glucosamine + H2O = peptidoglycan-D-glucosamine + acetate.. With respect to regulation, inhibited by CuCl(2) and ZnCl(2). Its function is as follows. Catalyzes the deacetylation of N-acetylglucosamine (GlcNAc) residues in peptidoglycan. Also acts on soluble chitin substrates and N-acetylchitooligomers. Acts on cell wall peptidoglycan from the Gram-positive bacteria B.cereus and B.subtilis and the Gram-negative bacterium H.pylori. Not active on acetylated xylan. This Bacillus cereus (strain ATCC 14579 / DSM 31 / CCUG 7414 / JCM 2152 / NBRC 15305 / NCIMB 9373 / NCTC 2599 / NRRL B-3711) protein is Peptidoglycan-N-acetylglucosamine deacetylase BC_3618.